A 414-amino-acid chain; its full sequence is EQQRYLNATKYIKLVIVADNVMVRKYTHNLIDIRKRIFEIVNILSLIYLSMNINVALVGVDIWTNGDKINVTSAVEPTLASFGTWRERDLLNRKTHDNAQLLTGINLNGDTVGYAYIGSMCMPKQSVGIVQDHGKTYHLVAVTMAHELGHNLGMDHDRDSCTCLANSCIMSATISPSYQFSDCSQNDHLRYLISHTPQCILNEPLRTDIVSPEVCGNYLLEEGEECDCGPLWNCQNPCCNAATCKLTPGAQCAEGLCCYQCRFIKAGNVCRPPRSECDIAESCTGQSAHCPTDRFHRNGQPCLNNHGYCYNGNCPIMLYQCIALFGAGTTVAEDVCFNYNLDGQGFFYCRRENDRIFPCAKEDVKCGRLYCKVYNDNVHPCRYQYLDNGMVDHGTKCAVGKVCSNRQCVDVNTP.

N-linked (GlcNAc...) asparagine glycans are attached at residues Asn7 and Asn70. The Peptidase M12B domain maps to 10–204 (KYIKLVIVAD…HTPQCILNEP (195 aa)). 3 disulfides stabilise this stretch: Cys121–Cys199, Cys161–Cys183, and Cys163–Cys168. Residue His146 participates in Zn(2+) binding. Glu147 is a catalytic residue. Positions 150 and 156 each coordinate Zn(2+). The 87-residue stretch at 212 to 298 (PEVCGNYLLE…HCPTDRFHRN (87 aa)) folds into the Disintegrin domain. Val214, Asn217, Glu221, Glu224, and Asp227 together coordinate Ca(2+). Intrachain disulfides connect Cys215–Cys244, Cys226–Cys239, Cys228–Cys234, Cys238–Cys261, Cys252–Cys258, Cys257–Cys283, Cys270–Cys290, Cys277–Cys309, Cys302–Cys314, Cys321–Cys371, Cys336–Cys381, Cys349–Cys359, Cys366–Cys403, and Cys397–Cys408. Positions 276-278 (ECD) match the D/ECD-tripeptide motif. Ca(2+)-binding residues include Asp278, Glu281, Asp293, and Arg294.

The protein belongs to the venom metalloproteinase (M12B) family. P-III subfamily. P-IIIa sub-subfamily. In terms of assembly, monomer. The cofactor is Zn(2+). In terms of tissue distribution, expressed by the venom gland.

It localises to the secreted. Functionally, snake venom zinc metalloprotease that induces apoptosis in vascular endothelial cells (VEC), without degrading the extracellular matrix (it cannot cleave collagen) or inhibiting adhesion of VEC. Has also fibrinogenolytic and hemorrhagic activities. The sequence is that of Zinc metalloproteinase-disintegrin-like batroxstatin-3 from Bothrops atrox (Barba amarilla).